Here is a 619-residue protein sequence, read N- to C-terminus: ESX-2 secretion system protein EccA2 (619 aa).

373 to 380 (GPPGTGKT) provides a ligand contact to ATP.

The protein belongs to the CbxX/CfxQ family. Part of the ESX-2 / type VII secretion system (T7SS), which is composed of cytosolic and membrane components.

It localises to the cytoplasm. Functionally, part of an ESX-2 / type VII specialized secretion system (T7SS), which exports several proteins. May have ATPase activity and might provide energy for the export of ESX-2 substrates. The sequence is that of ESX-2 secretion system protein EccA2 from Mycobacterium bovis (strain ATCC BAA-935 / AF2122/97).